Here is a 145-residue protein sequence, read N- to C-terminus: Large ribosomal subunit protein uL24 (145 aa).

Positions 108 to 145 (EPIQEEQQKTEETKQEIAPEEVEAKEAQDKQEVKENDQ) are disordered. Over residues 113 to 145 (EQQKTEETKQEIAPEEVEAKEAQDKQEVKENDQ) the composition is skewed to basic and acidic residues.

Belongs to the universal ribosomal protein uL24 family. In terms of assembly, part of the 50S ribosomal subunit.

In terms of biological role, one of two assembly initiator proteins, it binds directly to the 5'-end of the 23S rRNA, where it nucleates assembly of the 50S subunit. Functionally, located at the polypeptide exit tunnel on the outside of the subunit. This chain is Large ribosomal subunit protein uL24 (rpl24), found in Thermoplasma volcanium (strain ATCC 51530 / DSM 4299 / JCM 9571 / NBRC 15438 / GSS1).